The primary structure comprises 640 residues: Glycosyltransferase-like protein gnt14 (640 aa).

Residues 1–14 (MFGFKTTKNKKRVR) are Cytoplasmic-facing. The chain crosses the membrane as a helical; Signal-anchor for type II membrane protein span at residues 15 to 35 (LLVVAIGVMIFFMCLSNFSSI). The Extracellular segment spans residues 36–640 (QSRQSSSTDT…TENCYSNDHW (605 aa)). 2 disordered regions span residues 63-184 (PSIN…PLSS) and 254-277 (NSNN…NNNY). Residues 65–171 (ININNSENNI…NININNNNKP (107 aa)) show a composition bias toward low complexity. Residue asparagine 68 is glycosylated (N-linked (GlcNAc...) asparagine). Residues asparagine 410 and asparagine 539 are each glycosylated (N-linked (GlcNAc...) asparagine).

Belongs to the glycosyltransferase 8 family. Highly divergent.

The protein localises to the membrane. The sequence is that of Glycosyltransferase-like protein gnt14 (gnt14) from Dictyostelium discoideum (Social amoeba).